The sequence spans 191 residues: Molybdenum cofactor guanylyltransferase (191 aa).

Residues 13-15 (LAG), Lys26, Asp72, and Asp102 each bind GTP. Asp102 contributes to the Mg(2+) binding site.

This sequence belongs to the MobA family. As to quaternary structure, monomer. It depends on Mg(2+) as a cofactor.

The protein resides in the cytoplasm. It catalyses the reaction Mo-molybdopterin + GTP + H(+) = Mo-molybdopterin guanine dinucleotide + diphosphate. In terms of biological role, transfers a GMP moiety from GTP to Mo-molybdopterin (Mo-MPT) cofactor (Moco or molybdenum cofactor) to form Mo-molybdopterin guanine dinucleotide (Mo-MGD) cofactor. The protein is Molybdenum cofactor guanylyltransferase of Pseudomonas putida (strain ATCC 47054 / DSM 6125 / CFBP 8728 / NCIMB 11950 / KT2440).